The chain runs to 334 residues: Ornithine carbamoyltransferase (334 aa).

Residues 56-59, Gln-83, Arg-107, and 134-137 contribute to the carbamoyl phosphate site; these read STRT and HPTQ. Residues Asn-168, Asp-232, and 236 to 237 each bind L-ornithine; that span reads SM. Residues 274 to 275 and Arg-320 contribute to the carbamoyl phosphate site; that span reads CL.

The protein belongs to the aspartate/ornithine carbamoyltransferase superfamily. OTCase family.

The protein resides in the cytoplasm. The catalysed reaction is carbamoyl phosphate + L-ornithine = L-citrulline + phosphate + H(+). Its pathway is amino-acid biosynthesis; L-arginine biosynthesis; L-arginine from L-ornithine and carbamoyl phosphate: step 1/3. Its function is as follows. Reversibly catalyzes the transfer of the carbamoyl group from carbamoyl phosphate (CP) to the N(epsilon) atom of ornithine (ORN) to produce L-citrulline. This Escherichia coli O157:H7 protein is Ornithine carbamoyltransferase.